The chain runs to 214 residues: MVIDKSIPKATAKRLSLYYRIFKRFHADQVEKASSKQIADAMGIDSATVRRDFSYFGELGRRGFGYDVTKLMNFFADLLNDHSTTNVILVGCGNIGRALLHYRFHDRNKMQIAMGFDTDDNALVGTKTADNIPVHGISSVKERIANTDIETAILTVPSIHAQKVTDQLIEAGIKGILSFAPVHLQVPKGVIVQSVDLTSELQTLLYFMNQNHLD.

Positions 17–56 (LYYRIFKRFHADQVEKASSKQIADAMGIDSATVRRDFSYF) form a DNA-binding region, H-T-H motif. 91 to 96 (GCGNIG) is a binding site for NAD(+).

Belongs to the transcriptional regulatory Rex family. In terms of assembly, homodimer.

Its subcellular location is the cytoplasm. Functionally, modulates transcription in response to changes in cellular NADH/NAD(+) redox state. The polypeptide is Redox-sensing transcriptional repressor Rex (Streptococcus pyogenes serotype M4 (strain MGAS10750)).